The sequence spans 634 residues: MINIRFPDGSIREFEAGVNSLDVAKSISPSLAKATMAAYIDDQLKDAKDAINSNCELRLITVKDPEGLEILRHSCAHLLAHAVKELYPNTEVTIGPVVDNGFYYDFSFKESIGEADLPTIEKKMKELAKKSAPVSYRVVPKAEAIEFFKAQGENYKVEIIDSIADEQMKIYTQDNFSDLCRGPHIPNTSVLKAFKLTKLAGAYWRGNSDNEMLTRIYGTCWATKEDLEQYLNMLEEAEKRDHRKIGKVLDLFHFQEDSPGIAFWHDNGVRIWRQVEDYMRASNNKYGCSEIRTPLIADFSLWQKSGHASKYAENMFATKSENRDFAIRPMNCPTCVQVYNTKLHSYRDLPIRMAEFGIVHRNEPSGSLHGLLRVRSFTQDDGHIFCTPEQVEEEVILMVQQCFEVYKDFGFNDFAVKIALRPENRIGDDETWDKSEQMLKNALDANNVSYELLPGEGAFYGPKIEFHLKDAIGRSWQCGTIQLDFSMPQRLGATYIDKNGEKQVPVMLHRAIVGSLERFIGMLIEHYAGNLPLWLAPVQVAVMGISNNQDDYCKEVFIMLEKNGIRAKLDLRNEKIGFKIREHTLLRVPYLVILGKNEQEQKIITIRKHSGEDLGQMSVDDFCAFLDKQIQAKE.

In terms of domain architecture, TGS spans 1–61 (MINIRFPDGS…NSNCELRLIT (61 aa)). The tract at residues 241–532 (DHRKIGKVLD…LIEHYAGNLP (292 aa)) is catalytic. Residues C332, H383, and H509 each coordinate Zn(2+).

The protein belongs to the class-II aminoacyl-tRNA synthetase family. In terms of assembly, homodimer. Requires Zn(2+) as cofactor.

It is found in the cytoplasm. The enzyme catalyses tRNA(Thr) + L-threonine + ATP = L-threonyl-tRNA(Thr) + AMP + diphosphate + H(+). In terms of biological role, catalyzes the attachment of threonine to tRNA(Thr) in a two-step reaction: L-threonine is first activated by ATP to form Thr-AMP and then transferred to the acceptor end of tRNA(Thr). Also edits incorrectly charged L-seryl-tRNA(Thr). The sequence is that of Threonine--tRNA ligase from Francisella tularensis subsp. mediasiatica (strain FSC147).